The chain runs to 440 residues: NADH-quinone oxidoreductase subunit D (440 aa).

This sequence belongs to the complex I 49 kDa subunit family. In terms of assembly, NDH-1 is composed of 14 different subunits. Subunits NuoB, C, D, E, F, and G constitute the peripheral sector of the complex.

It is found in the cell membrane. The enzyme catalyses a quinone + NADH + 5 H(+)(in) = a quinol + NAD(+) + 4 H(+)(out). In terms of biological role, NDH-1 shuttles electrons from NADH, via FMN and iron-sulfur (Fe-S) centers, to quinones in the respiratory chain. The immediate electron acceptor for the enzyme in this species is believed to be a menaquinone. Couples the redox reaction to proton translocation (for every two electrons transferred, four hydrogen ions are translocated across the cytoplasmic membrane), and thus conserves the redox energy in a proton gradient. This is NADH-quinone oxidoreductase subunit D from Acidothermus cellulolyticus (strain ATCC 43068 / DSM 8971 / 11B).